Here is a 183-residue protein sequence, read N- to C-terminus: V-type ATP synthase subunit E (183 aa).

This sequence belongs to the V-ATPase E subunit family.

Its function is as follows. Produces ATP from ADP in the presence of a proton gradient across the membrane. In Fusobacterium nucleatum subsp. nucleatum (strain ATCC 25586 / DSM 15643 / BCRC 10681 / CIP 101130 / JCM 8532 / KCTC 2640 / LMG 13131 / VPI 4355), this protein is V-type ATP synthase subunit E.